The following is a 273-amino-acid chain: 4-hydroxy-tetrahydrodipicolinate reductase (273 aa).

NAD(+) is bound by residues 12–17 (GAGGRM) and Glu-38. Arg-39 is an NADP(+) binding site. Residues 102–104 (GTT) and 126–129 (AANF) contribute to the NAD(+) site. His-159 (proton donor/acceptor) is an active-site residue. Position 160 (His-160) interacts with (S)-2,3,4,5-tetrahydrodipicolinate. Lys-163 serves as the catalytic Proton donor. (S)-2,3,4,5-tetrahydrodipicolinate is bound at residue 169–170 (GT).

The protein belongs to the DapB family. In terms of assembly, homotetramer.

It is found in the cytoplasm. It catalyses the reaction (S)-2,3,4,5-tetrahydrodipicolinate + NAD(+) + H2O = (2S,4S)-4-hydroxy-2,3,4,5-tetrahydrodipicolinate + NADH + H(+). The catalysed reaction is (S)-2,3,4,5-tetrahydrodipicolinate + NADP(+) + H2O = (2S,4S)-4-hydroxy-2,3,4,5-tetrahydrodipicolinate + NADPH + H(+). It functions in the pathway amino-acid biosynthesis; L-lysine biosynthesis via DAP pathway; (S)-tetrahydrodipicolinate from L-aspartate: step 4/4. In terms of biological role, catalyzes the conversion of 4-hydroxy-tetrahydrodipicolinate (HTPA) to tetrahydrodipicolinate. The sequence is that of 4-hydroxy-tetrahydrodipicolinate reductase from Salmonella agona (strain SL483).